Here is a 506-residue protein sequence, read N- to C-terminus: Probable Xaa-Pro aminopeptidase PADG_06815 (506 aa).

D285, D296, E433, and E471 together coordinate Mn(2+).

This sequence belongs to the peptidase M24B family. Mn(2+) serves as cofactor.

It catalyses the reaction Release of any N-terminal amino acid, including proline, that is linked to proline, even from a dipeptide or tripeptide.. In terms of biological role, catalyzes the removal of a penultimate prolyl residue from the N-termini of peptides. This Paracoccidioides brasiliensis (strain Pb18) protein is Probable Xaa-Pro aminopeptidase PADG_06815.